The chain runs to 242 residues: Lactate utilization protein A 2 (242 aa).

It belongs to the LutA/YkgE family.

Functionally, is involved in L-lactate degradation and allows cells to grow with lactate as the sole carbon source. The chain is Lactate utilization protein A 2 from Bacillus cereus (strain Q1).